The sequence spans 242 residues: Phosphoribosylaminoimidazole-succinocarboxamide synthase (242 aa).

It belongs to the SAICAR synthetase family.

It catalyses the reaction 5-amino-1-(5-phospho-D-ribosyl)imidazole-4-carboxylate + L-aspartate + ATP = (2S)-2-[5-amino-1-(5-phospho-beta-D-ribosyl)imidazole-4-carboxamido]succinate + ADP + phosphate + 2 H(+). It functions in the pathway purine metabolism; IMP biosynthesis via de novo pathway; 5-amino-1-(5-phospho-D-ribosyl)imidazole-4-carboxamide from 5-amino-1-(5-phospho-D-ribosyl)imidazole-4-carboxylate: step 1/2. The chain is Phosphoribosylaminoimidazole-succinocarboxamide synthase from Trichodesmium erythraeum (strain IMS101).